A 410-amino-acid polypeptide reads, in one-letter code: G-protein coupled receptor family C group 5 member B (410 aa).

A signal peptide spans Met-1–Ser-28. The Extracellular segment spans residues Glu-29–Gly-56. Asn-30 is a glycosylation site (N-linked (GlcNAc...) asparagine). The helical transmembrane segment at Ile-57–Leu-77 threads the bilayer. Residues Leu-78–Cys-94 lie on the Cytoplasmic side of the membrane. The helical transmembrane segment at Leu-95–Ile-115 threads the bilayer. Residues Gln-116–Arg-126 lie on the Extracellular side of the membrane. A helical transmembrane segment spans residues Phe-127 to Val-147. At Arg-148–Ser-164 the chain is on the cytoplasmic side. A helical membrane pass occupies residues Leu-165–Val-185. Residues Leu-186–Asp-199 are Extracellular-facing. A helical membrane pass occupies residues Phe-200 to Phe-220. Residues Thr-221–Ala-234 lie on the Cytoplasmic side of the membrane. A helical transmembrane segment spans residues Phe-235 to Leu-255. At Phe-256–Thr-271 the chain is on the extracellular side. Residues Leu-272 to Ile-292 traverse the membrane as a helical segment. At His-293–Trp-410 the chain is on the cytoplasmic side. Ser-355 is subject to Phosphoserine. The disordered stretch occupies residues Leu-356–Asn-381. Low complexity predominate over residues Ser-360–Gly-371.

Belongs to the G-protein coupled receptor 3 family.

Its subcellular location is the cell membrane. It is found in the cytoplasmic vesicle membrane. G-protein coupled receptor involved in the regulation of cell volume. The protein is G-protein coupled receptor family C group 5 member B (Gprc5b) of Mus musculus (Mouse).